A 155-amino-acid chain; its full sequence is Conopressin/neurophysin (155 aa).

The signal sequence occupies residues 1–26; sequence MMSSLCGMPLTYLLTAAVLSLSLTDA. An intrachain disulfide couples Cys-27 to Cys-32. Glycine amide is present on Gly-35. Intrachain disulfides connect Cys-50–Cys-94, Cys-53–Cys-67, Cys-61–Cys-84, Cys-68–Cys-74, Cys-101–Cys-115, Cys-109–Cys-127, and Cys-116–Cys-121. A glycan (N-linked (GlcNAc...) asparagine) is linked at Asn-88.

Belongs to the vasopressin/oxytocin family. In terms of processing, seven disulfide bonds are present in neurophysin.

It is found in the secreted. The sequence is that of Conopressin/neurophysin from Lymnaea stagnalis (Great pond snail).